We begin with the raw amino-acid sequence, 285 residues long: NAD kinase (285 aa).

Aspartate 67 (proton acceptor) is an active-site residue. NAD(+)-binding positions include 67–68 (DG), 141–142 (ND), arginine 152, lysine 169, aspartate 171, 182–187 (TGYSLS), and glutamine 242.

The protein belongs to the NAD kinase family. Requires a divalent metal cation as cofactor.

It is found in the cytoplasm. It carries out the reaction NAD(+) + ATP = ADP + NADP(+) + H(+). Its function is as follows. Involved in the regulation of the intracellular balance of NAD and NADP, and is a key enzyme in the biosynthesis of NADP. Catalyzes specifically the phosphorylation on 2'-hydroxyl of the adenosine moiety of NAD to yield NADP. The sequence is that of NAD kinase from Trichlorobacter lovleyi (strain ATCC BAA-1151 / DSM 17278 / SZ) (Geobacter lovleyi).